Reading from the N-terminus, the 127-residue chain is Aspartate 1-decarboxylase (127 aa).

S25 functions as the Schiff-base intermediate with substrate; via pyruvic acid in the catalytic mechanism. S25 is subject to Pyruvic acid (Ser). T57 is a substrate binding site. Residue Y58 is the Proton donor of the active site. 73-75 (GAA) is a substrate binding site.

Belongs to the PanD family. Heterooctamer of four alpha and four beta subunits. The cofactor is pyruvate. Is synthesized initially as an inactive proenzyme, which is activated by self-cleavage at a specific serine bond to produce a beta-subunit with a hydroxyl group at its C-terminus and an alpha-subunit with a pyruvoyl group at its N-terminus.

It localises to the cytoplasm. It catalyses the reaction L-aspartate + H(+) = beta-alanine + CO2. It participates in cofactor biosynthesis; (R)-pantothenate biosynthesis; beta-alanine from L-aspartate: step 1/1. Its function is as follows. Catalyzes the pyruvoyl-dependent decarboxylation of aspartate to produce beta-alanine. The polypeptide is Aspartate 1-decarboxylase (Shouchella clausii (strain KSM-K16) (Alkalihalobacillus clausii)).